We begin with the raw amino-acid sequence, 379 residues long: Anhydro-N-acetylmuramic acid kinase (379 aa).

9–16 lines the ATP pocket; it reads GTSADGVD.

Belongs to the anhydro-N-acetylmuramic acid kinase family.

It carries out the reaction 1,6-anhydro-N-acetyl-beta-muramate + ATP + H2O = N-acetyl-D-muramate 6-phosphate + ADP + H(+). Its pathway is amino-sugar metabolism; 1,6-anhydro-N-acetylmuramate degradation. It participates in cell wall biogenesis; peptidoglycan recycling. Functionally, catalyzes the specific phosphorylation of 1,6-anhydro-N-acetylmuramic acid (anhMurNAc) with the simultaneous cleavage of the 1,6-anhydro ring, generating MurNAc-6-P. Is required for the utilization of anhMurNAc either imported from the medium or derived from its own cell wall murein, and thus plays a role in cell wall recycling. This chain is Anhydro-N-acetylmuramic acid kinase, found in Synechococcus sp. (strain CC9605).